A 935-amino-acid chain; its full sequence is Probable mediator of RNA polymerase II transcription subunit 15c (935 aa).

The segment covering 1 to 13 (MEGNTNWKPNEQG) has biased composition (polar residues). Disordered stretches follow at residues 1 to 28 (MEGNTNWKPNEQGGNRDAANNRIDWRSQ), 170 to 190 (NLPTSRPNNRDQQGAFQVSSS), 495 to 526 (SSVQSLQKQKRFHHRQMQQQQPQQGNHQHQMQ), 548 to 611 (QQVS…PVPG), and 635 to 654 (SSSKLGTQETPLLFVPPPEP). Residues 511-526 (MQQQQPQQGNHQHQMQ) show a composition bias toward low complexity. 2 stretches are compositionally biased toward polar residues: residues 548–577 (QQVSSSQRQVPKQESNVSSSQIQNHSSPQL) and 635–644 (SSSKLGTQET).

This sequence belongs to the plant Mediator complex subunit 15 family. Component of the Mediator complex.

The protein resides in the nucleus. Functionally, component of the Mediator complex, a coactivator involved in the regulated transcription of nearly all RNA polymerase II-dependent genes. Mediator functions as a bridge to convey information from gene-specific regulatory proteins to the basal RNA polymerase II transcription machinery. The Mediator complex, having a compact conformation in its free form, is recruited to promoters by direct interactions with regulatory proteins and serves for the assembly of a functional preinitiation complex with RNA polymerase II and the general transcription factors. In Arabidopsis thaliana (Mouse-ear cress), this protein is Probable mediator of RNA polymerase II transcription subunit 15c (MED15C).